The sequence spans 545 residues: Myotubularin-related protein 9 (545 aa).

At methionine 1 the chain carries N-acetylmethionine. The 96-residue stretch at 4-99 folds into the GRAM domain; that stretch reads AELIKTPRVD…LNIASSIEAL (96 aa). Positions 123–498 constitute a Myotubularin phosphatase domain; sequence GWHSFLPEQE…QSLQLWEGIF (376 aa). The stretch at 508-542 forms a coiled coil; the sequence is LDEAYEEMVNIIEYNKELQAKVNVLRRQLAELETE.

The protein belongs to the protein-tyrosine phosphatase family. Non-receptor class myotubularin subfamily. As to quaternary structure, homodimer. Heterodimer (via C-terminus) with lipid phosphatase MTMR6 (via C-terminus). Heterodimer (via coiled coil domain) with lipid phosphatase MTMR7 (via C-terminus).

Its subcellular location is the cytoplasm. The protein localises to the cell projection. It localises to the ruffle membrane. The protein resides in the perinuclear region. It is found in the endoplasmic reticulum. In terms of biological role, acts as an adapter for myotubularin-related phosphatases. Increases lipid phosphatase MTMR6 catalytic activity, specifically towards phosphatidylinositol 3,5-bisphosphate, and MTMR6 binding affinity for phosphorylated phosphatidylinositols. Positively regulates lipid phosphatase MTMR7 catalytic activity. The formation of the MTMR6-MTMR9 complex, stabilizes both MTMR6 and MTMR9 protein levels. Plays a role in the late stages of macropinocytosis possibly by regulating MTMR6-mediated dephosphorylation of phosphatidylinositol 3-phosphate in membrane ruffles. Negatively regulates DNA damage-induced apoptosis, in part via its association with MTMR6. Does not bind mono-, di- and tri-phosphorylated phosphatidylinositols, phosphatidic acid and phosphatidylserine. This is Myotubularin-related protein 9 (Mtmr9) from Mus musculus (Mouse).